The primary structure comprises 493 residues: Probable cytosol aminopeptidase (493 aa).

Mn(2+) contacts are provided by lysine 260 and aspartate 265. Lysine 272 is a catalytic residue. Mn(2+) is bound by residues aspartate 283, aspartate 342, and glutamate 344. Arginine 346 is a catalytic residue.

The protein belongs to the peptidase M17 family. The cofactor is Mn(2+).

The protein localises to the cytoplasm. The catalysed reaction is Release of an N-terminal amino acid, Xaa-|-Yaa-, in which Xaa is preferably Leu, but may be other amino acids including Pro although not Arg or Lys, and Yaa may be Pro. Amino acid amides and methyl esters are also readily hydrolyzed, but rates on arylamides are exceedingly low.. It carries out the reaction Release of an N-terminal amino acid, preferentially leucine, but not glutamic or aspartic acids.. Presumably involved in the processing and regular turnover of intracellular proteins. Catalyzes the removal of unsubstituted N-terminal amino acids from various peptides. In Clostridium perfringens (strain 13 / Type A), this protein is Probable cytosol aminopeptidase.